The following is a 703-amino-acid chain: Ion-translocating oxidoreductase complex subunit C (703 aa).

4Fe-4S ferredoxin-type domains follow at residues Met-368 to Tyr-397 and Lys-407 to Tyr-436. Residues Cys-377, Cys-380, Cys-383, Cys-387, Cys-416, Cys-419, Cys-422, and Cys-426 each coordinate [4Fe-4S] cluster. Disordered regions lie at residues Ala-505–Arg-558 and Ala-653–Pro-674. Residues Ala-524 to Gln-539 show a composition bias toward basic and acidic residues.

This sequence belongs to the 4Fe4S bacterial-type ferredoxin family. RnfC subfamily. The complex is composed of six subunits: RnfA, RnfB, RnfC, RnfD, RnfE and RnfG. The cofactor is [4Fe-4S] cluster.

It localises to the cell inner membrane. Functionally, part of a membrane-bound complex that couples electron transfer with translocation of ions across the membrane. The sequence is that of Ion-translocating oxidoreductase complex subunit C from Serratia proteamaculans (strain 568).